The chain runs to 1117 residues: Telomerase reverse transcriptase (1117 aa).

Positions 1–191 (MQKINNINNN…VKQKKWYKNN (191 aa)) are TEN. Positions 217–519 (NQYIYPEIQR…ENLEKVEEKL (303 aa)) are RBD. Residues 517–881 (EKLIPEDSFQ…NECQWIGKSI (365 aa)) enclose the Reverse transcriptase domain. The tract at residues 520–887 (IPEDSFQKYP…GKSIDMNTLE (368 aa)) is RT. A Mg(2+)-binding site is contributed by Asp-618. The interval 638-742 (SDLIQDTYFI…NQDKPRCITK (105 aa)) is TRAP. The Mg(2+) site is built by Asp-815 and Asp-816. The CTE stretch occupies residues 888-1117 (IKSIQKQTQQ…SAKSNQQNTN (230 aa)).

It belongs to the reverse transcriptase family. Telomerase subfamily. In terms of assembly, component of the telomerase holoenzyme complex, composed of the catalytic core (the catalytic subunit TERT, the telomerase RNA template component TER and TAP65/p65), which is associated with two heterotrimeric subcomplexes: (i) the replication protein A (RPA)-related subcomplex, composed of TEB1, RPA2/TEB2 and RPA3/TEB3 and (ii) the CST-like subcomplex, composed of TAP75/p75, TAP45/p45 and TAP19/p19. TEB1 and the CST-like subcomplex are tethered to the catalytic core by TAP50/p50.

It localises to the nucleus. It is found in the chromosome. The protein resides in the telomere. It catalyses the reaction DNA(n) + a 2'-deoxyribonucleoside 5'-triphosphate = DNA(n+1) + diphosphate. Catalytic component of telomerase, an essential ribonucleoprotein enzyme that copies new telomeric repeats onto chromosome ends by repetitively synthesizing the short telomere-repeat sequence 5'-TTGGGG-3' using an RNA template component TER. TERT is a reverse transcriptase that adds simple sequence repeats to chromosome ends by copying a template sequence within the RNA component of the enzyme. The protein is Telomerase reverse transcriptase of Tetrahymena thermophila (strain SB210).